A 404-amino-acid polypeptide reads, in one-letter code: Protein ORF23 (404 aa).

Belongs to the lymphocryptovirus BTRF1 family. As to quaternary structure, interacts with ORF34.

The protein localises to the host nucleus. It localises to the host cytoplasm. Its function is as follows. Plays a role in the expression of late genes. This is Protein ORF23 (ORF23) from Homo sapiens (Human).